Here is a 664-residue protein sequence, read N- to C-terminus: DNA ligase (664 aa).

NAD(+)-binding positions include 32–36 and 80–81; these read DKDYD and SL. K122 functions as the N6-AMP-lysine intermediate in the catalytic mechanism. NAD(+)-binding residues include R144, E178, and K314. 4 residues coordinate Zn(2+): C407, C410, C423, and C429. A BRCT domain is found at 587 to 664; it reads IKENIFNGKT…SEEDFKNMIG (78 aa).

This sequence belongs to the NAD-dependent DNA ligase family. LigA subfamily. The cofactor is Mg(2+). Mn(2+) serves as cofactor.

The catalysed reaction is NAD(+) + (deoxyribonucleotide)n-3'-hydroxyl + 5'-phospho-(deoxyribonucleotide)m = (deoxyribonucleotide)n+m + AMP + beta-nicotinamide D-nucleotide.. In terms of biological role, DNA ligase that catalyzes the formation of phosphodiester linkages between 5'-phosphoryl and 3'-hydroxyl groups in double-stranded DNA using NAD as a coenzyme and as the energy source for the reaction. It is essential for DNA replication and repair of damaged DNA. The polypeptide is DNA ligase (Clostridium novyi (strain NT)).